Consider the following 185-residue polypeptide: Prorelaxin 1 (185 aa).

Residues 1-22 form the signal peptide; sequence MSSRFLLQLLGFWLLLSQPCRT. 3 disulfide bridges follow: Cys-36-Cys-171, Cys-48-Cys-185, and Cys-170-Cys-175. The propeptide at 58–156 is connecting peptide; sequence SQEEPALLAR…LKYLQSDTHS (99 aa). The tract at residues 135 to 161 is disordered; that stretch reads RLGEAEDGSPPGLKYLQSDTHSRKKRE.

The protein belongs to the insulin family. In terms of assembly, heterodimer of a B chain and an A chain linked by two disulfide bonds.

Its subcellular location is the secreted. Functionally, relaxin is an ovarian hormone that acts with estrogen to produce dilatation of the birth canal in many mammals. This is Prorelaxin 1 (Rln1) from Mus musculus (Mouse).